The primary structure comprises 231 residues: Large ribosomal subunit protein uL1 (231 aa).

The protein belongs to the universal ribosomal protein uL1 family. Part of the 50S ribosomal subunit.

Binds directly to 23S rRNA. The L1 stalk is quite mobile in the ribosome, and is involved in E site tRNA release. In terms of biological role, protein L1 is also a translational repressor protein, it controls the translation of the L11 operon by binding to its mRNA. The chain is Large ribosomal subunit protein uL1 from Pseudomonas savastanoi pv. phaseolicola (strain 1448A / Race 6) (Pseudomonas syringae pv. phaseolicola (strain 1448A / Race 6)).